The sequence spans 127 residues: Fluoride-specific ion channel FluC (127 aa).

4 helical membrane passes run 4 to 24 (LLLA…LLSM), 35 to 55 (LGTL…FAWF), 71 to 91 (TGFC…VFLL), and 103 to 123 (VFVN…LFSA). Residues Gly75 and Thr78 each contribute to the Na(+) site.

It belongs to the fluoride channel Fluc/FEX (TC 1.A.43) family.

Its subcellular location is the cell inner membrane. It catalyses the reaction fluoride(in) = fluoride(out). With respect to regulation, na(+) is not transported, but it plays an essential structural role and its presence is essential for fluoride channel function. Its function is as follows. Fluoride-specific ion channel. Important for reducing fluoride concentration in the cell, thus reducing its toxicity. In Escherichia coli (strain K12 / MC4100 / BW2952), this protein is Fluoride-specific ion channel FluC.